We begin with the raw amino-acid sequence, 481 residues long: Aromatic amino acid aminotransferase DDB_G0272014 (481 aa).

K300 is modified (N6-(pyridoxal phosphate)lysine).

The protein belongs to the class-I pyridoxal-phosphate-dependent aminotransferase family. Pyridoxal 5'-phosphate is required as a cofactor.

Its subcellular location is the cytoplasm. It catalyses the reaction an aromatic L-alpha-amino acid + 2-oxoglutarate = an aromatic oxo-acid + L-glutamate. Functionally, has aromatic amino acid transaminase activity. The chain is Aromatic amino acid aminotransferase DDB_G0272014 from Dictyostelium discoideum (Social amoeba).